Reading from the N-terminus, the 327-residue chain is Spermidine/putrescine import ATP-binding protein PotA (327 aa).

The 231-residue stretch at 5–235 (IKVEAVEKHF…PKTLFVATFI (231 aa)) folds into the ABC transporter domain. Position 37 to 44 (37 to 44 (GPSGCGKT)) interacts with ATP.

The protein belongs to the ABC transporter superfamily. Spermidine/putrescine importer (TC 3.A.1.11.1) family. As to quaternary structure, the complex is composed of two ATP-binding proteins (PotA), two transmembrane proteins (PotB and PotC) and a solute-binding protein (PotD).

Its subcellular location is the cell membrane. It carries out the reaction ATP + H2O + polyamine-[polyamine-binding protein]Side 1 = ADP + phosphate + polyamineSide 2 + [polyamine-binding protein]Side 1.. Functionally, part of the ABC transporter complex PotABCD involved in spermidine/putrescine import. Responsible for energy coupling to the transport system. The sequence is that of Spermidine/putrescine import ATP-binding protein PotA from Bacillus thuringiensis (strain Al Hakam).